Consider the following 247-residue polypeptide: MKNYKFTISFVGTNYSGWQYQPNVPTIQNEVEEKLYYIVNKKKPIKQKIRAIGCSRTDKGVHAIEFVFNVKMEFDKDLNFLRKALNSALPKDIKIHNIEEVPLEFNSRFDALKKTYIYKLFFDEKNSPFFQDRAMLVYKPTDLGKMMEISHLFLGYKDFRGFTKELEDENGYCSVENITFKVDYPLVEISITANRFLRYMVRRMVGTMLSYAQGLISIDDVNDFLKAKRVSNHTAKAHGLYLKKVYY.

Aspartate 58 acts as the Nucleophile in catalysis. Substrate is bound at residue tyrosine 116.

The protein belongs to the tRNA pseudouridine synthase TruA family. As to quaternary structure, homodimer.

It catalyses the reaction uridine(38/39/40) in tRNA = pseudouridine(38/39/40) in tRNA. Its function is as follows. Formation of pseudouridine at positions 38, 39 and 40 in the anticodon stem and loop of transfer RNAs. In Hydrogenobaculum sp. (strain Y04AAS1), this protein is tRNA pseudouridine synthase A.